We begin with the raw amino-acid sequence, 495 residues long: Putative aldehyde dehydrogenase AldA (495 aa).

Position 212 to 218 (212 to 218 (GKGSESG)) interacts with NAD(+). Active-site residues include E256 and C290.

Belongs to the aldehyde dehydrogenase family.

It carries out the reaction an aldehyde + NAD(+) + H2O = a carboxylate + NADH + 2 H(+). The polypeptide is Putative aldehyde dehydrogenase AldA (aldA) (Staphylococcus aureus (strain MRSA252)).